Here is a 140-residue protein sequence, read N- to C-terminus: Ribonuclease P protein component (140 aa).

The protein belongs to the RnpA family. Consists of a catalytic RNA component (M1 or rnpB) and a protein subunit.

It catalyses the reaction Endonucleolytic cleavage of RNA, removing 5'-extranucleotides from tRNA precursor.. Its function is as follows. RNaseP catalyzes the removal of the 5'-leader sequence from pre-tRNA to produce the mature 5'-terminus. It can also cleave other RNA substrates such as 4.5S RNA. The protein component plays an auxiliary but essential role in vivo by binding to the 5'-leader sequence and broadening the substrate specificity of the ribozyme. The chain is Ribonuclease P protein component from Nostoc sp. (strain PCC 7120 / SAG 25.82 / UTEX 2576).